The primary structure comprises 286 residues: Expansin-B4 (286 aa).

The N-terminal stretch at 1–24 is a signal peptide; the sequence is MGSLSSLAAAAVFLSLLAVGHCAA. 2 N-linked (GlcNAc...) asparagine glycosylation sites follow: asparagine 28 and asparagine 44. One can recognise an Expansin-like EG45 domain in the interval 75-181; sequence GGACGFKHTN…TRVPCEFPGL (107 aa). 3 disulfide bridges follow: cysteine 78-cysteine 106, cysteine 109-cysteine 176, and cysteine 114-cysteine 120. The Expansin-like CBD domain occupies 194–281; sequence VYFAVLVEYE…NWRPNTFYRS (88 aa). An N-linked (GlcNAc...) asparagine glycan is attached at asparagine 257.

The protein belongs to the expansin family. Expansin B subfamily. As to expression, expressed in internodes.

It localises to the secreted. Its subcellular location is the cell wall. The protein resides in the membrane. Its function is as follows. May cause loosening and extension of plant cell walls by disrupting non-covalent bonding between cellulose microfibrils and matrix glucans. No enzymatic activity has been found. May be required for rapid internodal elongation in deepwater rice during submergence. This is Expansin-B4 (EXPB4) from Oryza sativa subsp. japonica (Rice).